The following is a 78-amino-acid chain: Large ribosomal subunit protein uL24 (78 aa).

This sequence belongs to the universal ribosomal protein uL24 family. Part of the 50S ribosomal subunit.

Its function is as follows. One of two assembly initiator proteins, it binds directly to the 5'-end of the 23S rRNA, where it nucleates assembly of the 50S subunit. One of the proteins that surrounds the polypeptide exit tunnel on the outside of the subunit. The chain is Large ribosomal subunit protein uL24 from Helicobacter hepaticus (strain ATCC 51449 / 3B1).